Here is a 747-residue protein sequence, read N- to C-terminus: MLGKGVVGGGGGTKGPKPSFVSYVRPEEIHTNEKEVTEKEVTLHLLPGEQLLCEASTVLKYVQEDSCQHGVYGRLVCTDFKIAFLGDDESALDNDETQFKNKVIGENDITLHCVDQIYGVFDEKKKTLFGQLKKYPGKLIIHCKDFRVFQFCLGYTKEEEVKRIVSGIIHHTQAPKLLKRLFLFSYATAAQNNTVTDPKNHTVMFDTLKDWCWELERTKGNMKYKAVSVNEGYKVCERLPAYFVVPTPLPEENVQRFQGHGIPIWCWSCHNGSALLKMSALPKEQDDGILQIQKSFLDGIYKTIHRSPYEIVKTEDVSSNFLSLQEIQTAYSKFKQLFLTDNSTEFWDTDIKWFSLLESSSWLDIIRRCLKKAIEITECMEAQNMNVLLLEENASDLCCLISSLVQLMMDPHCRTRIGFQSLIQKEWVMGGHCFLDRCNHLRQNDKEEVPVFLLFLDCVWQLVHQHPPAFEFTETYLTVLSDSLYIPIFSTFFFNSPHQKDANMGREGQDAQSKPLNLLTVWDWSVQFEPKAQTLLKNPLYVEKPKLDKGQRKGMRFKHQRQLSLPLTQSKSSPKRGFFREETDHLIKNLLGKRISKLINSSDELQDNFREFYDSWHSKSTDYHGLLLPHIEGPEIKVWAQRYLRWIPEAQILGGGQVATMSKLLEMMEEVQSLQEKIDERHHSQQVPQAEAPCLLRNSARLSSLFPFALLQRHSSKPVLPTSGWKALGDEDDLAKREDEFVDLGDV.

Over residues 1–14 (MLGKGVVGGGGGTK) the composition is skewed to gly residues. Residues 1 to 21 (MLGKGVVGGGGGTKGPKPSFV) are disordered. Residues 205-643 (FDTLKDWCWE…PEIKVWAQRY (439 aa)) enclose the Myotubularin phosphatase domain. An interaction with MTM1 region spans residues 449-558 (VPVFLLFLDC…KGQRKGMRFK (110 aa)). Phosphoserine occurs at positions 564, 601, and 716.

The protein belongs to the protein-tyrosine phosphatase family. Non-receptor class myotubularin subfamily. As to quaternary structure, heterodimer with lipid phosphatase MTM1. Heterodimer with lipid phosphatase MTMR2.

The protein resides in the cytoplasm. Its subcellular location is the sarcoplasmic reticulum. It is found in the myofibril. The protein localises to the sarcomere. Acts as an adapter for the myotubularin-related phosphatases. Regulates phosphatase MTM1 protein stability and possibly its intracellular location. By stabilizing MTM1 protein levels, required for skeletal muscle maintenance but not for myogenesis. This Pongo abelii (Sumatran orangutan) protein is Myotubularin-related protein 12 (MTMR12).